Here is a 504-residue protein sequence, read N- to C-terminus: ATP synthase subunit alpha 2 (504 aa).

Gly-169–Thr-176 serves as a coordination point for ATP.

The protein belongs to the ATPase alpha/beta chains family. As to quaternary structure, F-type ATPases have 2 components, CF(1) - the catalytic core - and CF(0) - the membrane proton channel. CF(1) has five subunits: alpha(3), beta(3), gamma(1), delta(1), epsilon(1). CF(0) has three main subunits: a(1), b(2) and c(9-12). The alpha and beta chains form an alternating ring which encloses part of the gamma chain. CF(1) is attached to CF(0) by a central stalk formed by the gamma and epsilon chains, while a peripheral stalk is formed by the delta and b chains.

Its subcellular location is the cell membrane. It carries out the reaction ATP + H2O + 4 H(+)(in) = ADP + phosphate + 5 H(+)(out). Functionally, produces ATP from ADP in the presence of a proton gradient across the membrane. The alpha chain is a regulatory subunit. In Listeria monocytogenes serovar 1/2a (strain ATCC BAA-679 / EGD-e), this protein is ATP synthase subunit alpha 2.